The following is a 32-amino-acid chain: Calcitonin (32 aa).

C1 and C7 form a disulfide bridge. Position 32 is a proline amide (P32).

The protein belongs to the calcitonin family.

The protein resides in the secreted. Calcitonin is a peptide hormone that causes a rapid but short-lived drop in the level of calcium and phosphate in blood by promoting the incorporation of those ions in the bones. Calcitonin function is mediated by the calcitonin receptor/CALCR and the CALCR-RAMP2 (AMYR2) receptor complex. This chain is Calcitonin (CALCA), found in Sus scrofa (Pig).